Reading from the N-terminus, the 264-residue chain is Tryptophan synthase alpha chain (264 aa).

Active-site proton acceptor residues include Glu-49 and Asp-60.

The protein belongs to the TrpA family. As to quaternary structure, tetramer of two alpha and two beta chains.

The catalysed reaction is (1S,2R)-1-C-(indol-3-yl)glycerol 3-phosphate + L-serine = D-glyceraldehyde 3-phosphate + L-tryptophan + H2O. Its pathway is amino-acid biosynthesis; L-tryptophan biosynthesis; L-tryptophan from chorismate: step 5/5. The alpha subunit is responsible for the aldol cleavage of indoleglycerol phosphate to indole and glyceraldehyde 3-phosphate. This chain is Tryptophan synthase alpha chain, found in Microcystis aeruginosa (strain NIES-843 / IAM M-2473).